We begin with the raw amino-acid sequence, 285 residues long: Polyamine aminopropyltransferase (285 aa).

The 237-residue stretch at 5–241 (DTWFTEHFQA…GWWSVTLSSK (237 aa)) folds into the PABS domain. Residue Gln-35 participates in S-methyl-5'-thioadenosine binding. His-66 and Asp-90 together coordinate spermidine. S-methyl-5'-thioadenosine contacts are provided by residues Asp-110 and 141 to 142 (DG). Asp-160 acts as the Proton acceptor in catalysis. Spermidine is bound at residue 160 to 163 (DSTD). S-methyl-5'-thioadenosine is bound at residue Pro-167.

It belongs to the spermidine/spermine synthase family. Homodimer or homotetramer.

The protein resides in the cytoplasm. It carries out the reaction S-adenosyl 3-(methylsulfanyl)propylamine + putrescine = S-methyl-5'-thioadenosine + spermidine + H(+). It functions in the pathway amine and polyamine biosynthesis; spermidine biosynthesis; spermidine from putrescine: step 1/1. In terms of biological role, catalyzes the irreversible transfer of a propylamine group from the amino donor S-adenosylmethioninamine (decarboxy-AdoMet) to putrescine (1,4-diaminobutane) to yield spermidine. The protein is Polyamine aminopropyltransferase of Xylella fastidiosa (strain M12).